The following is a 173-amino-acid chain: Shikimate kinase 2 (173 aa).

Residue 12-17 coordinates ATP; the sequence is GCGKTT. Thr-16 and Asp-32 together coordinate Mg(2+). The substrate site is built by Asp-34, Arg-58, and Gly-79. The LID domain stretch occupies residues 112–126; it reads QASPQAHQRPTLTGR. Arg-120 lines the ATP pocket. Arg-139 contacts substrate. An ATP-binding site is contributed by Gln-155.

Monomer. Requires Mg(2+) as cofactor.

The protein localises to the cytoplasm. It catalyses the reaction shikimate + ATP = 3-phosphoshikimate + ADP + H(+). Its pathway is metabolic intermediate biosynthesis; chorismate biosynthesis; chorismate from D-erythrose 4-phosphate and phosphoenolpyruvate: step 5/7. With respect to regulation, inhibited by chloride and sulfate ions. Its function is as follows. Catalyzes the specific phosphorylation of the 3-hydroxyl group of shikimic acid using ATP as a cosubstrate. This Dickeya chrysanthemi (Pectobacterium chrysanthemi) protein is Shikimate kinase 2 (aroL).